The chain runs to 274 residues: Large ribosomal subunit protein uL2 (274 aa).

Residues 224-274 (VAMNPVDHPHGGGEGRTSGGRHPVTPWGIPTKGYKTRRNKRSNKLIVQKRK) form a disordered region. Over residues 257–274 (YKTRRNKRSNKLIVQKRK) the composition is skewed to basic residues.

This sequence belongs to the universal ribosomal protein uL2 family. In terms of assembly, part of the 50S ribosomal subunit. Forms a bridge to the 30S subunit in the 70S ribosome.

One of the primary rRNA binding proteins. Required for association of the 30S and 50S subunits to form the 70S ribosome, for tRNA binding and peptide bond formation. It has been suggested to have peptidyltransferase activity; this is somewhat controversial. Makes several contacts with the 16S rRNA in the 70S ribosome. In Francisella tularensis subsp. mediasiatica (strain FSC147), this protein is Large ribosomal subunit protein uL2.